Consider the following 217-residue polypeptide: Guanylate kinase (217 aa).

Residues M1–S10 show a composition bias toward low complexity. Positions M1 to G30 are disordered. A Guanylate kinase-like domain is found at G30 to Y208. Residue G37–G44 coordinates ATP.

This sequence belongs to the guanylate kinase family.

Its subcellular location is the cytoplasm. The catalysed reaction is GMP + ATP = GDP + ADP. It catalyses the reaction dZMP + ATP = dZDP + ADP. The protein operates within purine metabolism. Functionally, essential for recycling GMP and indirectly, cGMP. (Microbial infection) Catalyzes the phosphorylation of dZMP to dZDP, when the bacterium is infected by a phage that produces the substrate for the synthesis of dZTP (2- amino-2'-deoxyadenosine 5'-triphosphate), which is then used by the phage as a DNA polymerase substrate. This chain is Guanylate kinase, found in Synechococcus sp. (strain JA-3-3Ab) (Cyanobacteria bacterium Yellowstone A-Prime).